Reading from the N-terminus, the 219-residue chain is MKVKEFMNNKKGATGVGTLIVFIAMVLVAAVAASVLINTSGFLQQKASSTGTESTEQVSTGLKMFQTSGKLNEPIIDRLTIYVTPSPGSKPVDLKNTKLLMNRWTFQPPPVSYSSTYFENNNKQIFDVTGSKAWNNGAILPEYNFGVIVIQDDDGSCTAESPVIGKGDMAVITINCTNLDLAPRTRLNGYLQSEIGFKTQFTYILPNAYDKTEDVVILQ.

Positions 1–12 (MKVKEFMNNKKG) are excised as a propeptide. N-linked (GlcNAc...) asparagine glycans are attached at residues asparagine 38 and asparagine 175.

The protein belongs to the archaeal flagellin family. Post-translationally, N-linked glycans consist of the 779 Da trisaccharide beta-ManNAc(Thr)-(1-4)-beta-GlcNAc3NAcA-(1-3)-beta-GlcNAc.

Its subcellular location is the archaeal flagellum. Functionally, flagellin is the subunit protein which polymerizes to form the filaments of archaeal flagella. This is Flagellin A (flaA) from Methanococcus voltae.